Reading from the N-terminus, the 216-residue chain is Talanin (216 aa).

As to expression, isoform 4 is expressed in placenta, lung, kidney and pancreas.

Its function is as follows. May play a role in uric acid excretion. The polypeptide is Talanin (ZNF365) (Homo sapiens (Human)).